The sequence spans 279 residues: Pantothenate synthetase (279 aa).

27–34 (MGYLHEGH) lines the ATP pocket. Residue His34 is the Proton donor of the active site. Gln58 serves as a coordination point for (R)-pantoate. A beta-alanine-binding site is contributed by Gln58. 144–147 (GKKD) lines the ATP pocket. Gln150 contacts (R)-pantoate. Residues Val173 and 181–184 (MSSR) each bind ATP.

The protein belongs to the pantothenate synthetase family. As to quaternary structure, homodimer.

The protein resides in the cytoplasm. It catalyses the reaction (R)-pantoate + beta-alanine + ATP = (R)-pantothenate + AMP + diphosphate + H(+). It participates in cofactor biosynthesis; (R)-pantothenate biosynthesis; (R)-pantothenate from (R)-pantoate and beta-alanine: step 1/1. In terms of biological role, catalyzes the condensation of pantoate with beta-alanine in an ATP-dependent reaction via a pantoyl-adenylate intermediate. The protein is Pantothenate synthetase of Geobacter sp. (strain M21).